The chain runs to 102 residues: Integration host factor subunit beta (102 aa).

Positions 54-102 (HHRPARMGRNPKTGEPVALPAKYVPHFKPGKELRERVNSSRHQAPLRSQ) are disordered. Residues 82–91 (PGKELRERVN) are compositionally biased toward basic and acidic residues. Residues 93 to 102 (SRHQAPLRSQ) show a composition bias toward polar residues.

The protein belongs to the bacterial histone-like protein family. In terms of assembly, heterodimer of an alpha and a beta chain.

Its function is as follows. This protein is one of the two subunits of integration host factor, a specific DNA-binding protein that functions in genetic recombination as well as in transcriptional and translational control. The sequence is that of Integration host factor subunit beta from Halorhodospira halophila (strain DSM 244 / SL1) (Ectothiorhodospira halophila (strain DSM 244 / SL1)).